A 650-amino-acid chain; its full sequence is Chaperone protein DnaK (650 aa).

Residue threonine 200 is modified to Phosphothreonine; by autocatalysis. Positions 613–634 (QAGAAGAAGAAAAEGAAQGGAQ) are enriched in low complexity. The segment at 613–637 (QAGAAGAAGAAAAEGAAQGGAQTAD) is disordered.

The protein belongs to the heat shock protein 70 family.

In terms of biological role, acts as a chaperone. This chain is Chaperone protein DnaK, found in Burkholderia thailandensis (strain ATCC 700388 / DSM 13276 / CCUG 48851 / CIP 106301 / E264).